The following is a 173-amino-acid chain: Photosystem I assembly protein Ycf3 (173 aa).

3 TPR repeats span residues 35-68 (AYIY…EENK), 72-105 (GETL…NPKQ), and 120-153 (GRNA…YPGG).

It belongs to the Ycf3 family.

The protein resides in the cellular thylakoid membrane. Its function is as follows. Essential for the assembly of the photosystem I (PSI) complex. May act as a chaperone-like factor to guide the assembly of the PSI subunits. This is Photosystem I assembly protein Ycf3 from Prochlorococcus marinus (strain MIT 9312).